Consider the following 155-residue polypeptide: Sec-independent protein translocase protein TatB (155 aa).

Residues 1–21 (MFGMGFFEILVVLVVAIIFLG) traverse the membrane as a helical segment. Residues 109–155 (SLENNAPPKHLNKEVSNREVFHNEPPKEIELIANNNTTKHDKEKEHV) form a disordered region. 2 stretches are compositionally biased toward basic and acidic residues: residues 119 to 138 (LNKE…KEIE) and 146 to 155 (TKHDKEKEHV).

Belongs to the TatB family. In terms of assembly, the Tat system comprises two distinct complexes: a TatABC complex, containing multiple copies of TatA, TatB and TatC subunits, and a separate TatA complex, containing only TatA subunits. Substrates initially bind to the TatABC complex, which probably triggers association of the separate TatA complex to form the active translocon.

The protein resides in the cell inner membrane. In terms of biological role, part of the twin-arginine translocation (Tat) system that transports large folded proteins containing a characteristic twin-arginine motif in their signal peptide across membranes. Together with TatC, TatB is part of a receptor directly interacting with Tat signal peptides. TatB may form an oligomeric binding site that transiently accommodates folded Tat precursor proteins before their translocation. The protein is Sec-independent protein translocase protein TatB of Helicobacter acinonychis (strain Sheeba).